Consider the following 147-residue polypeptide: Hemoglobin subunit epsilon (147 aa).

Residues 3-147 (HFTAEEKSTI…VATALAHKYH (145 aa)) enclose the Globin domain. Residues S14 and S51 each carry the phosphoserine modification. Residues H64 and H93 each coordinate heme b.

This sequence belongs to the globin family. In terms of assembly, heterotetramer of two alpha chains and two epsilon chains in early embryonic hemoglobin Gower-2; two zeta chains and two epsilon chains in early embryonic hemoglobin Gower-1. In terms of tissue distribution, red blood cells.

The epsilon chain is a beta-type chain of early mammalian embryonic hemoglobin. The chain is Hemoglobin subunit epsilon (HBE1) from Eulemur fulvus fulvus (Brown lemur).